The chain runs to 144 residues: UPF0102 protein BMA2801 (144 aa).

Residues 1–28 (MCHAREASPGTGEPEAAPRDNFPRAAGS) form a disordered region.

It belongs to the UPF0102 family.

The polypeptide is UPF0102 protein BMA2801 (Burkholderia mallei (strain ATCC 23344)).